Reading from the N-terminus, the 160-residue chain is Large ribosomal subunit protein eL21A (160 aa).

The disordered stretch occupies residues 114 to 138 (AKRKEAKAQGKTVQLRRQPAPPAKA).

This sequence belongs to the eukaryotic ribosomal protein eL21 family. Component of the large ribosomal subunit (LSU). Mature yeast ribosomes consist of a small (40S) and a large (60S) subunit. The 40S small subunit contains 1 molecule of ribosomal RNA (18S rRNA) and at least 33 different proteins. The large 60S subunit contains 3 rRNA molecules (25S, 5.8S and 5S rRNA) and at least 46 different proteins.

The protein localises to the cytoplasm. Component of the ribosome, a large ribonucleoprotein complex responsible for the synthesis of proteins in the cell. The small ribosomal subunit (SSU) binds messenger RNAs (mRNAs) and translates the encoded message by selecting cognate aminoacyl-transfer RNA (tRNA) molecules. The large subunit (LSU) contains the ribosomal catalytic site termed the peptidyl transferase center (PTC), which catalyzes the formation of peptide bonds, thereby polymerizing the amino acids delivered by tRNAs into a polypeptide chain. The nascent polypeptides leave the ribosome through a tunnel in the LSU and interact with protein factors that function in enzymatic processing, targeting, and the membrane insertion of nascent chains at the exit of the ribosomal tunnel. In Schizosaccharomyces pombe (strain 972 / ATCC 24843) (Fission yeast), this protein is Large ribosomal subunit protein eL21A (rpl2101).